A 482-amino-acid polypeptide reads, in one-letter code: BTB/POZ domain and ankyrin repeat-containing protein NOOT1 (482 aa).

Residues 25 to 107 (SDVVFSVEGR…LYSGQVSIVP (83 aa)) enclose the BTB domain. The segment at 113–127 (RPNCGDRGCWHTHCT) adopts a C2HC NPR-type zinc-finger fold. The Zn(2+) site is built by Cys116, Cys121, His123, and Cys126. 4 ANK repeats span residues 249–278 (QKIR…LNLD), 279–308 (EALA…DVNF), 313–342 (TGKT…DPNV), and 346–380 (DGVT…KLRL). The interval 395 to 434 (EEGNNNNSNNNNNATASSATNMYPHHNMNEDHHHSHNNNN) is disordered. A compositionally biased stretch (low complexity) spans 398 to 415 (NNNNSNNNNNATASSATN).

The protein belongs to the plant 'ANKYRIN-BTB/POZ' family. 'NOOT-BOP-COCH-like' (NBCL) subfamily. As to quaternary structure, homodimer. As to expression, expressed in the shoot apical meristem (SAM) at the base of the developing leaf where stipules are formed. Associated with functional and vestigial abscission zones (AZs), including pulvini.

Its subcellular location is the nucleus. The protein localises to the cytoplasm. The protein resides in the cell membrane. The protein operates within protein modification; protein ubiquitination. May act as a substrate-specific adapter of an E3 ubiquitin-protein ligase complex (CUL3-RBX1-BTB) which mediates the ubiquitination and subsequent proteasomal degradation of target proteins. Transcriptional co-regulator involved in the promotion of leaf and floral meristem fate and determinacy. Promotes normal stipule growth and development. Required for the abscission of senescent organs, probably by regulating the cell wall disorganization in abscission zones (AZs, e.g. pulvini at the base of leaves). Involved in the coordination of the symbiotic nodule developmental program. Promotes the formation of root nodules by interacting directly with APP1 to modulate the expression of the nuclear transcription factor Y subunit (NF-YA1), a key nodulin. Necessary for the robust maintenance of nodule identity throughout the nodule developmental program. Involved in the regulation of indeterminate nodule identity in association with NOOT2. The sequence is that of BTB/POZ domain and ankyrin repeat-containing protein NOOT1 from Medicago truncatula (Barrel medic).